A 359-amino-acid chain; its full sequence is Methyltransferase fsa4 (359 aa).

Residues 198-199 (GG), D224, 248-249 (SF), R264, and R265 each bind S-adenosyl-L-methionine.

This sequence belongs to the class I-like SAM-binding methyltransferase superfamily. Cation-independent O-methyltransferase family.

It functions in the pathway mycotoxin biosynthesis. Methyltransferase; part of the gene cluster that mediates the biosynthesis of HIV-1 integrase inhibitor equisetin and of fusarisetin A, both trans-fused decalin-containing tetramic acids showing also antimicrobial activity. The PKS module of fsa1 together with the enoylreductase fsa3 catalyze the formation of the polyketide unit which is then conjugated to L-serine by the condensation domain of the fsa1 NRPS module. Activity of the Dieckmann cyclase domain (RED) results in release of the Dieckmann product intermediate. Diels-Alderase fsa2 is involved in endo-selective Diels-Alder cycloaddition to form the decalin ring, leading to the production of N-desmethylequisetin also called trichosetin. Subsequent N-methylation is carried out by fsa4 to give equisetin. The enzymatic gene responsible for the conversion of equisetin to fusarisetin A has not been identified yet and is probably located outside of the fsa cluster. The sequence is that of Methyltransferase fsa4 from Fusarium sp. (strain FN080326).